We begin with the raw amino-acid sequence, 223 residues long: Ribose-5-phosphate isomerase A (223 aa).

Substrate is bound by residues 28–31 (TGST), 81–84 (DGAD), and 94–97 (KGGG). Catalysis depends on E103, which acts as the Proton acceptor. K121 is a substrate binding site.

Belongs to the ribose 5-phosphate isomerase family. Homodimer.

It catalyses the reaction aldehydo-D-ribose 5-phosphate = D-ribulose 5-phosphate. It participates in carbohydrate degradation; pentose phosphate pathway; D-ribose 5-phosphate from D-ribulose 5-phosphate (non-oxidative stage): step 1/1. Functionally, catalyzes the reversible conversion of ribose-5-phosphate to ribulose 5-phosphate. The protein is Ribose-5-phosphate isomerase A of Herminiimonas arsenicoxydans.